The primary structure comprises 302 residues: Phosphoribosylaminoimidazole-succinocarboxamide synthase (302 aa).

Belongs to the SAICAR synthetase family.

The catalysed reaction is 5-amino-1-(5-phospho-D-ribosyl)imidazole-4-carboxylate + L-aspartate + ATP = (2S)-2-[5-amino-1-(5-phospho-beta-D-ribosyl)imidazole-4-carboxamido]succinate + ADP + phosphate + 2 H(+). It functions in the pathway purine metabolism; IMP biosynthesis via de novo pathway; 5-amino-1-(5-phospho-D-ribosyl)imidazole-4-carboxamide from 5-amino-1-(5-phospho-D-ribosyl)imidazole-4-carboxylate: step 1/2. The sequence is that of Phosphoribosylaminoimidazole-succinocarboxamide synthase from Polaromonas sp. (strain JS666 / ATCC BAA-500).